Consider the following 343-residue polypeptide: Fructose-1,6-bisphosphatase, cytosolic (343 aa).

Positions 71, 100, 121, 123, and 124 each coordinate Mg(2+). Substrate contacts are provided by residues 124-127, asparagine 215, tyrosine 247, tyrosine 267, and lysine 277; that span reads DGSS. Mg(2+) is bound at residue glutamate 283.

It belongs to the FBPase class 1 family. Mg(2+) is required as a cofactor.

It localises to the cytoplasm. It carries out the reaction beta-D-fructose 1,6-bisphosphate + H2O = beta-D-fructose 6-phosphate + phosphate. The protein is Fructose-1,6-bisphosphatase, cytosolic (CFBP) of Saccharum hybrid (Sugarcane).